Here is a 241-residue protein sequence, read N- to C-terminus: B-cell receptor-associated protein 29 (241 aa).

Topologically, residues 1 to 6 (MTLQWA) are lumenal. A helical transmembrane segment spans residues 7–27 (AVATFLYAEIGLILIFCLPFI). At 28–43 (PPQRWQKIFSFNVWGK) the chain is on the cytoplasmic side. Residues 44–64 (IATFWNKAFLTIIILLIVLFL) form a helical membrane-spanning segment. Residues 65–103 (DAVREVRKYSSVHTIEKSSTSRPDAYEHTQMKLFRSQRN) lie on the Lumenal side of the membrane. Residues 104–124 (LYISGFSLFFWLVLRRLVTLI) form a helical membrane-spanning segment. Residues 125–241 (TQLAKELSNK…RLERGNKKRL (117 aa)) are Cytoplasmic-facing. Residues 166-233 (GKDEECVLEA…KEHSELQDRL (68 aa)) adopt a coiled-coil conformation. The tract at residues 198–223 (LSKAQNDVMEMKMQSERLSKEYDQLL) is disordered. Residues 206-223 (MEMKMQSERLSKEYDQLL) are compositionally biased toward basic and acidic residues. The Di-lysine motif motif lies at 238-241 (KKRL).

The protein belongs to the BCAP29/BCAP31 family. In terms of assembly, homodimer. Heterodimer with BCAP31. Binds CASP8 (isoform 9) as a complex containing BCAP31, BCAP29, BCL2 and/or BCL2L1. Interacts with VAMP3, VAMP1 and membrane IgD immunoglobulins. May interact with ACTG1 and non-muscle myosin II.

Its subcellular location is the endoplasmic reticulum membrane. In terms of biological role, may play a role in anterograde transport of membrane proteins from the endoplasmic reticulum to the Golgi. May be involved in CASP8-mediated apoptosis. The sequence is that of B-cell receptor-associated protein 29 (BCAP29) from Homo sapiens (Human).